Consider the following 282-residue polypeptide: Putative lactoylglutathione lyase (282 aa).

Ala2 carries the N-acetylalanine modification. 2 VOC domains span residues Arg17–Arg141 and Pro147–Asn274. His20 is a binding site for Zn(2+). Position 24 (Arg24) interacts with substrate. Glu71 contacts Zn(2+). Asn75 and His89 together coordinate substrate. 2 residues coordinate Zn(2+): His89 and Glu137. Glu137 functions as the Proton donor/acceptor in the catalytic mechanism. Leu254–Gly255 contacts substrate.

This sequence belongs to the glyoxalase I family. It depends on Zn(2+) as a cofactor.

It catalyses the reaction (R)-S-lactoylglutathione = methylglyoxal + glutathione. It functions in the pathway secondary metabolite metabolism; methylglyoxal degradation; (R)-lactate from methylglyoxal: step 1/2. Its function is as follows. Catalyzes the conversion of hemimercaptal, formed from methylglyoxal and glutathione, to S-lactoylglutathione. This Brassica oleracea var. gemmifera (Brussel sprouts) protein is Putative lactoylglutathione lyase.